A 200-amino-acid chain; its full sequence is Ras-related protein Rab-10 (200 aa).

Positions 18, 19, 20, 21, 22, 23, 24, 35, 36, 40, and 41 each coordinate GTP. Thr-23 is a binding site for Mg(2+). 2 short sequence motifs (switch) span residues 32–46 (DAFN…EIDF) and 64–81 (DTAG…YYRG). The Mg(2+) site is built by Thr-41 and Asp-64. Gly-67 contacts GTP. A Phosphothreonine modification is found at Thr-73. At Lys-102 the chain carries N6-acetyllysine. Lys-102 participates in a covalent cross-link: Glycyl lysine isopeptide (Lys-Gly) (interchain with G-Cter in ubiquitin). The GTP site is built by Asn-122, Lys-123, Asp-125, and Met-126. Lys-136 participates in a covalent cross-link: Glycyl lysine isopeptide (Lys-Gly) (interchain with G-Cter in ubiquitin). Residues Ser-152, Ala-153, and Lys-154 each contribute to the GTP site. Lys-154 participates in a covalent cross-link: Glycyl lysine isopeptide (Lys-Gly) (interchain with G-Cter in ubiquitin). Residues Cys-199 and Cys-200 are each lipidated (S-geranylgeranyl cysteine).

The protein belongs to the small GTPase superfamily. Rab family. As to quaternary structure, interacts with MYO5A; mediates the transport to the plasma membrane of SLC2A4/GLUT4 storage vesicles. Interacts with GDI1 and with GDI2; negatively regulates RAB10 association with membranes and activation. Interacts (GDP-bound form) with LLGL1; the interaction is direct and promotes RAB10 association with membranes and activation through competition with the Rab inhibitor GDI1. Interacts with EXOC4; probably associates with the exocyst. Interacts (GTP-bound form) with MICALCL, MICAL1, MICAL3, EHBP1 and EHBP1L1; at least in case of MICAL1 two molecules of RAB10 can bind to one molecule of MICAL1. Interacts with TBC1D13. Interacts with SEC16A. Interacts with CHM. Interacts with LRRK2; interaction facilitates phosphorylation of Thr-73. Interacts with RILPL1 and RILPL2 when phosphorylated on Thr-73. Interacts with TBC1D21. Interacts with MARCKS. Mg(2+) serves as cofactor. Phosphorylation of Thr-73 in the switch II region by LRRK2 prevents the association of RAB regulatory proteins, including CHM and RAB GDP dissociation inhibitors GDI1 and GDI2. Phosphorylation of Thr-73 by LRRK2 is stimulated by RAB29 and RAB32. Phosphorylation by LRRK2 is required for localization to stressed lysosomes. In terms of tissue distribution, highest levels in neural and muscle tissues.

The protein localises to the cytoplasmic vesicle membrane. It is found in the golgi apparatus. The protein resides in the trans-Golgi network membrane. Its subcellular location is the endosome membrane. It localises to the recycling endosome membrane. The protein localises to the cytoplasmic vesicle. It is found in the phagosome membrane. The protein resides in the cell projection. Its subcellular location is the cilium. It localises to the endoplasmic reticulum membrane. The protein localises to the cytoplasm. It is found in the perinuclear region. The protein resides in the lysosome. The catalysed reaction is GTP + H2O = GDP + phosphate + H(+). With respect to regulation, regulated by guanine nucleotide exchange factors (GEFs) DENND4C and RABIF which promote the exchange of bound GDP for free GTP. Regulated by GTPase activating proteins (GAPs) including TBC1D21 which increase the GTP hydrolysis activity. Inhibited by GDP dissociation inhibitors GDI1 and GDI2 which prevent Rab-GDP dissociation. Its function is as follows. The small GTPases Rab are key regulators of intracellular membrane trafficking, from the formation of transport vesicles to their fusion with membranes. Rabs cycle between an inactive GDP-bound form and an active GTP-bound form that is able to recruit to membranes different set of downstream effectors directly responsible for vesicle formation, movement, tethering and fusion. That Rab is mainly involved in the biosynthetic transport of proteins from the Golgi to the plasma membrane. Regulates, for instance, SLC2A4/GLUT4 glucose transporter-enriched vesicles delivery to the plasma membrane. In parallel, it regulates the transport of TLR4, a toll-like receptor to the plasma membrane and therefore may be important for innate immune response. Also plays a specific role in asymmetric protein transport to the plasma membrane. In neurons, it is involved in axonogenesis through regulation of vesicular membrane trafficking toward the axonal plasma membrane. In epithelial cells, it regulates transport from the Golgi to the basolateral membrane. May play a role in the basolateral recycling pathway and in phagosome maturation. May play a role in endoplasmic reticulum dynamics and morphology controlling tubulation along microtubules and tubules fusion. Together with LRRK2, RAB8A, and RILPL1, it regulates ciliogenesis. When phosphorylated by LRRK2 on Thr-73, it binds RILPL1 and inhibits ciliogenesis. Participates in the export of a subset of neosynthesized proteins through a Rab8-Rab10-Rab11-dependent endososomal export route. Targeted to and stabilized on stressed lysosomes through LRRK2 phosphorylation where it promotes the extracellular release of lysosomal content through EHBP1 and EHNP1L1 effector proteins. In Rattus norvegicus (Rat), this protein is Ras-related protein Rab-10.